A 126-amino-acid polypeptide reads, in one-letter code: Bleomycin resistance protein (126 aa).

The VOC domain maps to 1 to 119 (MTDQATPNLP…DGTLLRLIQN (119 aa)).

This sequence belongs to the bleomycin resistance protein family.

In terms of biological role, binding protein with a strong affinity to the bleomycin family of antibiotics. Binds to CL990; an antimitotic-antibiotic compound. In Klebsiella pneumoniae, this protein is Bleomycin resistance protein (ble).